A 267-amino-acid chain; its full sequence is Exosome complex component Rrp42 (267 aa).

This sequence belongs to the RNase PH family. Rrp42 subfamily. As to quaternary structure, component of the archaeal exosome complex. Forms a hexameric ring-like arrangement composed of 3 Rrp41-Rrp42 heterodimers. The hexameric ring associates with a trimer of Rrp4 and/or Csl4 subunits.

It localises to the cytoplasm. Non-catalytic component of the exosome, which is a complex involved in RNA degradation. Contributes to the structuring of the Rrp41 active site. This is Exosome complex component Rrp42 from Methanopyrus kandleri (strain AV19 / DSM 6324 / JCM 9639 / NBRC 100938).